The chain runs to 276 residues: MKLCGFEVGLDQPLFLIAGPCVIESMQLQLDTAGKLKEVTDRLGVNFIFKSSFDKANRTSGTAFRGPGMEEGLKVLAEVKKQIGVPVLTDVHEYTPMDEVASVVDVLQTPAFLVRQTDFIRKVCSAGKPVNIKKGQFLAPWDMKPVVEKAKATGNEQIMVCERGASFGYNNLVSDMRSLAVMRDTGCPVVFDATHSVQLPGGQGTSSGGQREHVPVLARAAVAVGISGLFAETHPDPSKALSDGPNAWPLDQMEALLETLMELDAVTKKHGFSRFA.

Belongs to the KdsA family.

Its subcellular location is the cytoplasm. It catalyses the reaction D-arabinose 5-phosphate + phosphoenolpyruvate + H2O = 3-deoxy-alpha-D-manno-2-octulosonate-8-phosphate + phosphate. Its pathway is carbohydrate biosynthesis; 3-deoxy-D-manno-octulosonate biosynthesis; 3-deoxy-D-manno-octulosonate from D-ribulose 5-phosphate: step 2/3. It participates in bacterial outer membrane biogenesis; lipopolysaccharide biosynthesis. This chain is 2-dehydro-3-deoxyphosphooctonate aldolase, found in Stenotrophomonas maltophilia (strain R551-3).